Reading from the N-terminus, the 158-residue chain is Ethylene-responsive transcription factor ERF120 (158 aa).

A DNA-binding region (AP2/ERF) is located at residues K86–E147. The interval V134–N158 is disordered. Over residues K144–N158 the composition is skewed to basic and acidic residues.

The protein belongs to the AP2/ERF transcription factor family. ERF subfamily.

The protein localises to the nucleus. In terms of biological role, probably acts as a transcriptional activator. Binds to the GCC-box pathogenesis-related promoter element. May be involved in the regulation of gene expression by stress factors and by components of stress signal transduction pathways. The protein is Ethylene-responsive transcription factor ERF120 (ERF120) of Arabidopsis thaliana (Mouse-ear cress).